The sequence spans 240 residues: tRNA (guanine-N(1)-)-methyltransferase (240 aa).

S-adenosyl-L-methionine-binding positions include Gly110 and Leu129–Leu134.

The protein belongs to the RNA methyltransferase TrmD family. As to quaternary structure, homodimer.

It localises to the cytoplasm. It carries out the reaction guanosine(37) in tRNA + S-adenosyl-L-methionine = N(1)-methylguanosine(37) in tRNA + S-adenosyl-L-homocysteine + H(+). Specifically methylates guanosine-37 in various tRNAs. This is tRNA (guanine-N(1)-)-methyltransferase from Clostridium botulinum (strain ATCC 19397 / Type A).